Here is a 345-residue protein sequence, read N- to C-terminus: Variable large protein 23 (345 aa).

The signal sequence occupies residues M1–S18. A lipid anchor (N-palmitoyl cysteine) is attached at C19. Residue C19 is the site of S-diacylglycerol cysteine attachment.

Belongs to the variable large protein (Vlp) family. Delta subfamily.

The protein resides in the cell outer membrane. In terms of biological role, the Vlp and Vsp proteins are antigenically distinct proteins, only one vlp or vsp gene is transcriptionally active at any one time. Switching between these genes is a mechanism of host immune response evasion. The sequence is that of Variable large protein 23 from Borrelia hermsii.